We begin with the raw amino-acid sequence, 428 residues long: Sialidase-3 (428 aa).

The FRIP motif motif lies at 24–27; the sequence is YRIP. Substrate is bound by residues Arg-25 and Arg-45. Asp-50 functions as the Proton acceptor in the catalytic mechanism. The stretch at 129-140 is one BNR 1 repeat; sequence IYSQDAGCSWSE. Substrate-binding residues include Tyr-179 and Tyr-181. The stretch at 203–214 is one BNR 2 repeat; sequence IYSDDLGVTWHH. Positions 225 and 245 each coordinate substrate. One copy of the BNR 3 repeat lies at 254 to 265; that stretch reads ALSTDHGEGFQR. Positions 294 to 318 are disordered; sequence RCQDSSSKDAPTIQQSSPGSSLRLE. The segment covering 301-313 has biased composition (polar residues); it reads KDAPTIQQSSPGS. At Ser-313 the chain carries Phosphoserine. Arg-340 lines the substrate pocket. The active-site Nucleophile is Tyr-370. The active site involves Glu-387.

It belongs to the glycosyl hydrolase 33 family. As to quaternary structure, interacts with CAV1; this interaction enhances NEU3 sialidase activity within caveola. Interacts with EGFR; this interaction mediates desialylation of EGFR and enhances downstream signaling. Post-translationally, palmitoylated; may regulate intracellular trafficking and anchorage to plasma membrane and endomembranes. In terms of tissue distribution, highly expressed in skeletal muscle, testis, adrenal gland and thymus, followed by pancreas, liver, heart and thymus. Weakly expressed in kidney, placenta, brain and lung.

Its subcellular location is the cell membrane. The protein localises to the membrane. The protein resides in the caveola. It localises to the early endosome membrane. It is found in the recycling endosome membrane. Its subcellular location is the lysosome membrane. It carries out the reaction Hydrolysis of alpha-(2-&gt;3)-, alpha-(2-&gt;6)-, alpha-(2-&gt;8)- glycosidic linkages of terminal sialic acid residues in oligosaccharides, glycoproteins, glycolipids, colominic acid and synthetic substrates.. It catalyses the reaction a ganglioside GD1a + H2O = a ganglioside GM1 + N-acetylneuraminate. The catalysed reaction is a ganglioside GD1a (d18:1(4E)) + H2O = a ganglioside GM1 (d18:1(4E)) + N-acetylneuraminate. The enzyme catalyses a ganglioside GD1b + H2O = a ganglioside GM1 + N-acetylneuraminate. It carries out the reaction a ganglioside GD1b (d18:1(4E)) + H2O = a ganglioside GM1 (d18:1(4E)) + N-acetylneuraminate. It catalyses the reaction a ganglioside GD3 + H2O = a ganglioside GM3 + N-acetylneuraminate. The catalysed reaction is a ganglioside GD3 (d18:1(4E)) + H2O = a ganglioside GM3 (d18:1(4E)) + N-acetylneuraminate. The enzyme catalyses a ganglioside GM3 + H2O = a beta-D-galactosyl-(1-&gt;4)-beta-D-glucosyl-(1&lt;-&gt;1)-ceramide + N-acetylneuraminate. It carries out the reaction a ganglioside GM1 + H2O = a ganglioside GA1 + N-acetylneuraminate. It catalyses the reaction a ganglioside GM1 (d18:1(4E)) + H2O = a ganglioside GA1 (d18:1(4E)) + N-acetylneuraminate. The catalysed reaction is a ganglioside GM2 (d18:1(4E)) + H2O = a ganglioside GA2 (d18:1(4E)) + N-acetylneuraminate. The enzyme catalyses a ganglioside GM3 (d18:1(4E)) + H2O = a beta-D-Gal-(1-&gt;4)-beta-D-Glc-(1&lt;-&gt;1)-Cer(d18:1(4E)) + N-acetylneuraminate. It carries out the reaction a ganglioside GT1b + H2O = a ganglioside GD1b + N-acetylneuraminate. Functionally, exo-alpha-sialidase that catalyzes the hydrolytic cleavage of the terminal sialic acid (N-acetylneuraminic acid, Neu5Ac) of a glycan moiety in the catabolism of glycolipids, glycoproteins and oligosacharides. Displays high catalytic efficiency for gangliosides including alpha-(2-&gt;3)-sialylated GD1a and GM3 and alpha-(2-&gt;8)-sialylated GD3. Plays a role in the regulation of transmembrane signaling through the modulation of ganglioside content of the lipid bilayer and by direct interaction with signaling receptors, such as EGFR. Desialylates EGFR and activates downstream signaling in proliferating cells. Contributes to clathrin-mediated endocytosis by regulating sorting of endocytosed receptors to early and recycling endosomes. The chain is Sialidase-3 (NEU3) from Homo sapiens (Human).